Reading from the N-terminus, the 73-residue chain is Translation initiation factor IF-1 (73 aa).

The region spanning 1–72 (MAKEDVIEVE…SRGRITYRYR (72 aa)) is the S1-like domain.

Belongs to the IF-1 family. Component of the 30S ribosomal translation pre-initiation complex which assembles on the 30S ribosome in the order IF-2 and IF-3, IF-1 and N-formylmethionyl-tRNA(fMet); mRNA recruitment can occur at any time during PIC assembly.

The protein localises to the cytoplasm. In terms of biological role, one of the essential components for the initiation of protein synthesis. Stabilizes the binding of IF-2 and IF-3 on the 30S subunit to which N-formylmethionyl-tRNA(fMet) subsequently binds. Helps modulate mRNA selection, yielding the 30S pre-initiation complex (PIC). Upon addition of the 50S ribosomal subunit IF-1, IF-2 and IF-3 are released leaving the mature 70S translation initiation complex. In Rubrobacter xylanophilus (strain DSM 9941 / JCM 11954 / NBRC 16129 / PRD-1), this protein is Translation initiation factor IF-1.